Here is a 362-residue protein sequence, read N- to C-terminus: Probable cinnamyl alcohol dehydrogenase 8D (362 aa).

A Zn(2+)-binding site is contributed by cysteine 45. Threonine 47 contacts NADP(+). Positions 67, 68, 98, 101, 104, 112, and 161 each coordinate Zn(2+). Residues threonine 165, 186–191 (GLGGLG), 209–214 (SSSPAK), threonine 249, glycine 273, and 296–298 (NGV) each bind NADP(+).

Belongs to the zinc-containing alcohol dehydrogenase family. In terms of assembly, homodimer. Zn(2+) serves as cofactor.

The catalysed reaction is (E)-cinnamyl alcohol + NADP(+) = (E)-cinnamaldehyde + NADPH + H(+). It catalyses the reaction (E)-coniferol + NADP(+) = (E)-coniferaldehyde + NADPH + H(+). The enzyme catalyses (E)-sinapyl alcohol + NADP(+) = (E)-sinapaldehyde + NADPH + H(+). It carries out the reaction (E)-4-coumaroyl alcohol + NADP(+) = (E)-4-coumaraldehyde + NADPH + H(+). The catalysed reaction is (E)-caffeyl alcohol + NADP(+) = (E)-caffeyl aldehyde + NADPH + H(+). It participates in aromatic compound metabolism; phenylpropanoid biosynthesis. In terms of biological role, involved in lignin biosynthesis. Catalyzes the final step specific for the production of lignin monomers. Catalyzes the NADPH-dependent reduction of coniferaldehyde, 5-hydroxyconiferaldehyde, sinapaldehyde, 4-coumaraldehyde and caffeyl aldehyde to their respective alcohols. This chain is Probable cinnamyl alcohol dehydrogenase 8D, found in Oryza sativa subsp. japonica (Rice).